The primary structure comprises 547 residues: Chaperonin GroEL (547 aa).

Residues 30 to 33 (TLGP), lysine 51, 87 to 91 (DGTTT), glycine 415, and aspartate 496 contribute to the ATP site.

This sequence belongs to the chaperonin (HSP60) family. Forms a cylinder of 14 subunits composed of two heptameric rings stacked back-to-back. Interacts with the co-chaperonin GroES.

The protein localises to the cytoplasm. The enzyme catalyses ATP + H2O + a folded polypeptide = ADP + phosphate + an unfolded polypeptide.. Together with its co-chaperonin GroES, plays an essential role in assisting protein folding. The GroEL-GroES system forms a nano-cage that allows encapsulation of the non-native substrate proteins and provides a physical environment optimized to promote and accelerate protein folding. This chain is Chaperonin GroEL, found in Haemophilus ducreyi (strain 35000HP / ATCC 700724).